The primary structure comprises 314 residues: MQTASLKNGTLKIGTRGSKLALAQAYETRRRLMEAHGLPEEAIEIIPMSTAGDRIQDRALSEIGGKGLFTEEIEQALTDGRIDLAVHSTKDMPTVLPDGLHLSVFLEREDPRDAFIGRTASRLLDLPQGATVGSSSLRRQALIRRLRPDIQVVIFRGNVDTRLRKLEAGEVDGTFLACAGLRRLGLGDVITDLADPESFPPAPGQGAIGIETRIGDTRIDTLLAPLAHRETGIALACERAFLAALDGSCRTPIAGLATVNGDTVSFHGMILKPDGSEAHEIKTEGPASNAAAIGTEAAEHLRAKAGPQFFEGWE.

S-(dipyrrolylmethanemethyl)cysteine is present on cysteine 249.

This sequence belongs to the HMBS family. As to quaternary structure, monomer. Requires dipyrromethane as cofactor.

It catalyses the reaction 4 porphobilinogen + H2O = hydroxymethylbilane + 4 NH4(+). It functions in the pathway porphyrin-containing compound metabolism; protoporphyrin-IX biosynthesis; coproporphyrinogen-III from 5-aminolevulinate: step 2/4. In terms of biological role, tetrapolymerization of the monopyrrole PBG into the hydroxymethylbilane pre-uroporphyrinogen in several discrete steps. This chain is Porphobilinogen deaminase, found in Brucella anthropi (strain ATCC 49188 / DSM 6882 / CCUG 24695 / JCM 21032 / LMG 3331 / NBRC 15819 / NCTC 12168 / Alc 37) (Ochrobactrum anthropi).